A 672-amino-acid chain; its full sequence is Spermatid perinuclear RNA-binding protein (672 aa).

Residues 5-362 enclose the DZF domain; that stretch reads RSFANDDRHV…ALKRPFEDGV (358 aa). The interval 348 to 370 is disordered; the sequence is GTGSSALKRPFEDGVGDDKDPNK. A compositionally biased stretch (basic and acidic residues) spans 356–370; sequence RPFEDGVGDDKDPNK. Residues 386–452 enclose the DRBM 1 domain; that stretch reads DLMNALMRLN…AVKVLQAMGY (67 aa). The interval 463-494 is disordered; sequence VSSDEKSDNEGKNETVSSISSNNTGNSTADTS. Positions 465 to 475 are enriched in basic and acidic residues; the sequence is SDEKSDNEGKN. A compositionally biased stretch (low complexity) spans 477–490; that stretch reads TVSSISSNNTGNST. The region spanning 509–575 is the DRBM 2 domain; the sequence is SGKNPVMELN…ALAALEKLFS (67 aa).

It is found in the cytoplasm. In terms of biological role, may be involved in normal spermatogenesis and sperm function. Binds to double-stranded DNA and RNA. The chain is Spermatid perinuclear RNA-binding protein (STRBP) from Gallus gallus (Chicken).